Reading from the N-terminus, the 576-residue chain is Epsin-1 (576 aa).

6 residues coordinate a 1,2-diacyl-sn-glycero-3-phospho-(1D-myo-inositol-4,5-bisphosphate): R8, K11, R25, N30, R63, and H73. Positions 12 to 144 (NIVHNYSEAE…RDEDRLREER (133 aa)) constitute an ENTH domain. Residues 149–185 (KTKEKLAQTATASSAAVGSGPPPEAEQAWPQSSGEEE) form a disordered region. The segment covering 157–167 (TATASSAAVGS) has biased composition (low complexity). 3 UIM domains span residues 183 to 202 (EEEL…ADQP), 208 to 227 (EDDA…HDKE), and 233 to 252 (GDDL…TGGK). A compositionally biased stretch (low complexity) spans 265-296 (TAPAPAPTTDPWGGPAPMAAAVPTAAPTSDPW). The disordered stretch occupies residues 265-404 (TAPAPAPTTD…GGFDTEPDEF (140 aa)). 8 consecutive repeat copies span residues 274 to 276 (DPW), 294 to 296 (DPW), 306 to 308 (DPW), 319 to 321 (DPW), 332 to 334 (DPW), 349 to 351 (DPW), 367 to 369 (DPW), and 377 to 379 (DPW). An 8 X 3 AA repeats of [ED]-P-W region spans residues 274-379 (DPWGGPAPMA…TPAPAFSDPW (106 aa)). Positions 297–314 (GGPPVPPAADPWGGPAPT) are enriched in pro residues. Positions 332–368 (DPWGGTPAPAAGEGPTPDPWGSSDGGVPVSGPSASDP) are enriched in low complexity. S382 carries the phosphoserine; by CDK1 modification. The [DE]-X(1,2)-F-X-X-[FL]-X-X-X-R motif motif lies at 402–411 (DEFSDFDRLR). Residues S419, S420, S435, S447, and S454 each carry the phosphoserine modification. The disordered stretch occupies residues 448–576 (LAEAVGSPPP…PAPNTNPFLL (129 aa)). A compositionally biased stretch (pro residues) spans 454–468 (SPPPAATPTPTPPTR). A phosphothreonine mark is found at T460, T464, and T470. Position 473 is a phosphoserine (S473). The residue at position 494 (T494) is a Phosphothreonine. Repeat copies occupy residues 502 to 504 (NPF) and 518 to 520 (NPF). Residues 502-574 (NPFLPGGGPA…GPPAPNTNPF (73 aa)) are 3 X 3 AA repeats of N-P-F. Residue R534 is modified to Omega-N-methylarginine. Residues 557–570 (GLPPMMPPGPPAPN) are compositionally biased toward pro residues. Repeat unit 3 spans residues 572–574 (NPF).

Belongs to the epsin family. As to quaternary structure, monomer. Binds clathrin, ZBTB16/ZNF145 and ITSN1. Binds ubiquitinated proteins. Binds AP2A1 and AP2A2. Interacts with RALBP1 in a complex also containing NUMB and TFAP2A during interphase and mitosis. Interacts with AP2B1. Interacts with UBQLN2. Interacts with REPS2; the interaction is direct. Interacts with EPS15; the interaction is direct. Interacts with ENTREP1. Phosphorylated on serine and/or threonine residues in mitotic cells. Phosphorylation reduces interaction with REPS2, AP-2 and the membrane fraction. Depolarization of synaptosomes results in dephosphorylation. Post-translationally, ubiquitinated.

It is found in the cytoplasm. It localises to the cell membrane. Its subcellular location is the nucleus. The protein localises to the membrane. The protein resides in the clathrin-coated pit. In terms of biological role, binds to membranes enriched in phosphatidylinositol 4,5-bisphosphate (PtdIns(4,5)P2). Modifies membrane curvature and facilitates the formation of clathrin-coated invaginations. Regulates receptor-mediated endocytosis. This is Epsin-1 (EPN1) from Homo sapiens (Human).